The chain runs to 269 residues: MTVEQREASRLGPLFDSCRAENRAALIGYLPTGYPDVNTSVRAMTELVESGCDIVEVGVPYSDPGMDGPTIQRATEAALSGGVRVRDALTAVESISKAGGRAVVMTYWNPVLRYGGDAFARDLAAAGGHGLITPDLIPDEAQQWLAASDAHGLDRIFLVAPSSTPERLANTVAASRGFVYAASTMGVTGARDAVSNAAPDLVARVKAVSDIPVGVGLGVRSREQAAEIGRYADGVIVGSALVSALGDGLPSLRSLTEELAAGVRQRKSP.

Residues Glu-56 and Asp-67 each act as proton acceptor in the active site.

The protein belongs to the TrpA family. In terms of assembly, tetramer of two alpha and two beta chains.

The catalysed reaction is (1S,2R)-1-C-(indol-3-yl)glycerol 3-phosphate + L-serine = D-glyceraldehyde 3-phosphate + L-tryptophan + H2O. It participates in amino-acid biosynthesis; L-tryptophan biosynthesis; L-tryptophan from chorismate: step 5/5. The alpha subunit is responsible for the aldol cleavage of indoleglycerol phosphate to indole and glyceraldehyde 3-phosphate. The chain is Tryptophan synthase alpha chain from Mycobacterium ulcerans (strain Agy99).